A 297-amino-acid chain; its full sequence is Polyamine aminopropyltransferase 2 (297 aa).

In terms of domain architecture, PABS spans 26 to 258 (FYWEPDVEGG…DLWTFFVALK (233 aa)). Q53 contributes to the S-methyl-5'-thioadenosine binding site. Positions 84 and 108 each coordinate spermidine. Residues D128 and 157–158 (DV) contribute to the S-methyl-5'-thioadenosine site. The active-site Proton acceptor is D176. S-methyl-5'-thioadenosine is bound at residue P184.

This sequence belongs to the spermidine/spermine synthase family. Homodimer or homotetramer.

The protein resides in the cytoplasm. The enzyme catalyses S-adenosyl 3-(methylsulfanyl)propylamine + putrescine = S-methyl-5'-thioadenosine + spermidine + H(+). It functions in the pathway amine and polyamine biosynthesis; spermidine biosynthesis; spermidine from putrescine: step 1/1. Its function is as follows. Catalyzes the irreversible transfer of a propylamine group from the amino donor S-adenosylmethioninamine (decarboxy-AdoMet) to putrescine (1,4-diaminobutane) to yield spermidine. The chain is Polyamine aminopropyltransferase 2 from Caldanaerobacter subterraneus subsp. tengcongensis (strain DSM 15242 / JCM 11007 / NBRC 100824 / MB4) (Thermoanaerobacter tengcongensis).